The primary structure comprises 427 residues: 3-phosphoshikimate 1-carboxyvinyltransferase (427 aa).

Lysine 20, serine 21, and arginine 25 together coordinate 3-phosphoshikimate. Lysine 20 is a binding site for phosphoenolpyruvate. Residues glycine 92 and arginine 120 each coordinate phosphoenolpyruvate. Positions 166, 168, 312, and 339 each coordinate 3-phosphoshikimate. Glutamine 168 lines the phosphoenolpyruvate pocket. The active-site Proton acceptor is the aspartate 312. Phosphoenolpyruvate contacts are provided by arginine 343 and arginine 385.

It belongs to the EPSP synthase family. As to quaternary structure, monomer.

The protein resides in the cytoplasm. The catalysed reaction is 3-phosphoshikimate + phosphoenolpyruvate = 5-O-(1-carboxyvinyl)-3-phosphoshikimate + phosphate. It participates in metabolic intermediate biosynthesis; chorismate biosynthesis; chorismate from D-erythrose 4-phosphate and phosphoenolpyruvate: step 6/7. Catalyzes the transfer of the enolpyruvyl moiety of phosphoenolpyruvate (PEP) to the 5-hydroxyl of shikimate-3-phosphate (S3P) to produce enolpyruvyl shikimate-3-phosphate and inorganic phosphate. This chain is 3-phosphoshikimate 1-carboxyvinyltransferase, found in Streptococcus thermophilus (strain CNRZ 1066).